The primary structure comprises 754 residues: Neprilysin-1 (754 aa).

Residues 5-27 traverse the membrane as a helical; Signal-anchor for type II membrane protein segment; sequence FGPPIVFLISCYALILCGTVDAL. N-linked (GlcNAc...) asparagine glycosylation is found at Asn38, Asn81, Asn132, Asn217, Asn273, Asn303, and Asn441. In terms of domain architecture, Peptidase M13 spans 63-754; the sequence is VGDSEGYQEA…MNPTKRCVVW (692 aa). 4 disulfide bridges follow: Cys87–Cys739, Cys95–Cys699, Cys151–Cys414, and Cys624–Cys751. Zn(2+) is bound at residue His587. The active site involves Glu588. Residue His591 participates in Zn(2+) binding. Asn612 carries N-linked (GlcNAc...) asparagine glycosylation. Residue Glu649 coordinates Zn(2+). The active-site Proton donor is the Asp653.

The protein belongs to the peptidase M13 family. Zn(2+) serves as cofactor. Specifically expressed in pharyngeal cells and a single head neuron.

Its subcellular location is the membrane. Probable cell surface protease. Required to control the neuronal innervation of pharyngeal pumping. This chain is Neprilysin-1 (nep-1), found in Caenorhabditis elegans.